Here is a 211-residue protein sequence, read N- to C-terminus: Urease accessory protein UreG (211 aa).

Residue G11–T18 participates in GTP binding.

This sequence belongs to the SIMIBI class G3E GTPase family. UreG subfamily. Homodimer. UreD, UreF and UreG form a complex that acts as a GTP-hydrolysis-dependent molecular chaperone, activating the urease apoprotein by helping to assemble the nickel containing metallocenter of UreC. The UreE protein probably delivers the nickel.

The protein resides in the cytoplasm. Its function is as follows. Facilitates the functional incorporation of the urease nickel metallocenter. This process requires GTP hydrolysis, probably effectuated by UreG. This is Urease accessory protein UreG from Actinobacillus pleuropneumoniae (Haemophilus pleuropneumoniae).